A 35-amino-acid polypeptide reads, in one-letter code: Mu/omega-theraphotoxin-Tap1a (35 aa).

3 disulfides stabilise this stretch: Cys3-Cys18, Cys10-Cys23, and Cys17-Cys30.

Belongs to the neurotoxin 10 (Hwtx-1) family. 59 (Tltx) subfamily. Expressed by the venom gland.

It is found in the secreted. In terms of biological role, gating-modifier toxin that inhibits both sodium (Nav) and calcium (Cav3) channels by inducing hyperpolarizing shift in voltage-dependence of activation and steady state inactivation. Inhibits Nav1.1/SCN1A, Nav1.2/SCN2A, Nav1.3/SCN3A, Nav1.6/SCN6A, Nav1.7/SCN9A and Cav3.1/CACNA1G sodium and calcium channels at nanomolar concentrations (IC(50)=81-301 nM). Surprisingly, selectively slows fast inactivation of Nav1.3/SCN3A. Also shows moderate inhibition of Cav3.2/CACNA1H calcium channels (IC(50)=1233 nM). Ex vivo, nearly ablates neuronal mechanosensitivity in afferent fibers innervating the colon and the bladder. In vivo, in a mouse model of irritable bowel syndrome, intracolonic administration of the toxin reverses colonic mechanical hypersensitivity. The chain is Mu/omega-theraphotoxin-Tap1a from Theraphosa apophysis (Goliath pinkfoot tarantula).